A 351-amino-acid chain; its full sequence is Pentatricopeptide repeat-containing protein At2g40240, mitochondrial (351 aa).

Residues 1–27 (MSLLRRRFVKQSVNCITFLQILAERSF) constitute a mitochondrion transit peptide. PPR repeat units lie at residues 106 to 140 (RKNA…RLGL), 141 to 175 (TPST…SVSM), 176 to 210 (DVTA…GNSP), 211 to 245 (DSRS…GVTV), 246 to 280 (LYST…DLRL), and 281 to 315 (DSES…GLRM).

This sequence belongs to the PPR family. P subfamily.

The protein localises to the mitochondrion. This chain is Pentatricopeptide repeat-containing protein At2g40240, mitochondrial, found in Arabidopsis thaliana (Mouse-ear cress).